A 156-amino-acid chain; its full sequence is Egg-lysin (156 aa).

Positions M1–S18 are cleaved as a signal peptide.

Monomer. Homodimer. Molecules associate into dimers and then rapidly dissociate again. Interacts (as a monomer) with the egg vitelline layer protein VERL (via VERL repeats); each VERL chain can bind multiple copies of lysin. In terms of tissue distribution, sperm.

It is found in the cytoplasmic vesicle. The protein localises to the secretory vesicle. It localises to the acrosome lumen. Creates a 3 um hole in the egg vitelline layer through which the sperm passes. Does not have enzyme activity. Species-specific interaction between the sperm protein lysin and the egg protein VERL exposes a basic surface on lysin that may dissociate the egg vitelline layer via electrostatic repulsion. Plays a role in ensuring species-specific fertilization. This is Egg-lysin from Haliotis cracherodii (Black abalone).